The following is a 161-amino-acid chain: Vitamin K epoxide reductase complex subunit 1 (161 aa).

The Cytoplasmic segment spans residues 1–9 (MGTTWRSPG). The chain crosses the membrane as a helical span at residues 10–29 (RLRLALCLAGLALSLYALHV). Residues 30-80 (KAARARNEDYRALCDVGTAISCSRVFSSRWGRGFGLVEHVLGADSILNQSN) lie on the Lumenal side of the membrane. Cysteine 43 and cysteine 51 are joined by a disulfide. Residue asparagine 80 participates in (S)-warfarin binding. The helical transmembrane segment at 81–95 (SIFGCMFYTIQLLLG) threads the bilayer. The Cytoplasmic portion of the chain corresponds to 96–100 (CLRGR). A helical membrane pass occupies residues 101–128 (WASILLILSSLVSVAGSLYLAWILFFVL). Over 129–131 (YDF) the chain is Lumenal. Cysteine 132 and cysteine 135 are joined by a disulfide. A helical transmembrane segment spans residues 132 to 153 (CIVCITTYAINAGLMLLSFQKV). Positions 135 and 139 each coordinate phylloquinone. Tyrosine 139 is a binding site for (S)-warfarin. Topologically, residues 154-161 (PEHKVKKP) are cytoplasmic.

This sequence belongs to the VKOR family. Highly expressed in liver. Detected at lower levels in lung, kidney and testis.

The protein resides in the endoplasmic reticulum membrane. It catalyses the reaction phylloquinone + [protein]-disulfide + H2O = 2,3-epoxyphylloquinone + [protein]-dithiol. It carries out the reaction phylloquinol + [protein]-disulfide = phylloquinone + [protein]-dithiol. Its activity is regulated as follows. Inhibited by warfarin (coumadin). Warfarin locks VKORC1 in both redox states into the closed conformation. Its function is as follows. Involved in vitamin K metabolism. Catalytic subunit of the vitamin K epoxide reductase (VKOR) complex which reduces inactive vitamin K 2,3-epoxide to active vitamin K. Vitamin K is required for the gamma-carboxylation of various proteins, including clotting factors, and is required for normal blood coagulation, but also for normal bone development. This is Vitamin K epoxide reductase complex subunit 1 (Vkorc1) from Rattus norvegicus (Rat).